The following is a 237-amino-acid chain: Glutathione S-transferase psoE (237 aa).

The GST N-terminal domain occupies 2 to 79 (VFGTLYTFPG…YITSQNEQTT (78 aa)). Residues R37, K49, V50, E63, C64, and N99 each coordinate glutathione. K49 provides a ligand contact to substrate. Positions 84–222 (DKKEYAEIIK…NNPPEKKPET (139 aa)) constitute a GST C-terminal domain. Q108 is a substrate binding site. Residues 208 to 222 (EPKLTNNPPEKKPET) show a composition bias toward basic and acidic residues. The interval 208–237 (EPKLTNNPPEKKPETVPKNGAAVAIEATQA) is disordered.

It belongs to the GST superfamily. Requires glutathione as cofactor.

It participates in secondary metabolite biosynthesis. In terms of biological role, glutathione S-transferase; part of the gene cluster that mediates the biosynthesis of pseurotin A, a competitive inhibitor of chitin synthase and an inducer of nerve-cell proliferation. The PKS-NRPS hybrid synthetase psoA is responsible for the biosynthesis of azaspirene, one of the first intermediates having the 1-oxa-7-azaspiro[4,4]-non-2-ene-4,6-dione core of pseurotin, via condensation of one acetyl-CoA, 4 malonyl-CoA, and a L-phenylalanine molecule. The dual-functional monooxygenase/methyltransferase psoF seems to be involved in the addition of the C3 methyl group onto the pseurotin scaffold. Azaspirene is then converted to synerazol through 4 steps including oxidation of C17 by the cytochrome P450 monooxygenase psoD, O-methylation of the hydroxy group of C8 by the methyltransferase psoC, and the trans-to-cis isomerization of the C13 olefin by the glutathione S-transferase psoE. The fourth step of synerazol production is performed by the dual-functional monooxygenase/methyltransferase psoF which seems to catalyze the epoxidation of the intermediate deepoxy-synerazol. Synerazol can be attacked by a water molecule nonenzymatically at two different positions to yield two diol products, pseurotin A and pseurotin D. The polypeptide is Glutathione S-transferase psoE (Aspergillus fumigatus (strain ATCC MYA-4609 / CBS 101355 / FGSC A1100 / Af293) (Neosartorya fumigata)).